A 610-amino-acid chain; its full sequence is Aspartate--tRNA(Asp/Asn) ligase (610 aa).

E196 lines the L-aspartate pocket. Residues 220 to 223 form an aspartate region; sequence QIFK. R242 contacts L-aspartate. ATP contacts are provided by residues 242–244 and Q251; that span reads RDE. H465 lines the L-aspartate pocket. An ATP-binding site is contributed by E499. Residue R506 coordinates L-aspartate. 551–554 provides a ligand contact to ATP; the sequence is GMDR.

This sequence belongs to the class-II aminoacyl-tRNA synthetase family. Type 1 subfamily. As to quaternary structure, homodimer.

It is found in the cytoplasm. The enzyme catalyses tRNA(Asx) + L-aspartate + ATP = L-aspartyl-tRNA(Asx) + AMP + diphosphate. Its function is as follows. Aspartyl-tRNA synthetase with relaxed tRNA specificity since it is able to aspartylate not only its cognate tRNA(Asp) but also tRNA(Asn). Reaction proceeds in two steps: L-aspartate is first activated by ATP to form Asp-AMP and then transferred to the acceptor end of tRNA(Asp/Asn). The chain is Aspartate--tRNA(Asp/Asn) ligase from Nitratidesulfovibrio vulgaris (strain ATCC 29579 / DSM 644 / CCUG 34227 / NCIMB 8303 / VKM B-1760 / Hildenborough) (Desulfovibrio vulgaris).